Consider the following 351-residue polypeptide: sn-glycerol-3-phosphate import ATP-binding protein UgpC (351 aa).

The region spanning 4-235 is the ABC transporter domain; it reads IVLDNVRKSY…PASTFVATFI (232 aa). 37-44 is an ATP binding site; it reads GPSGCGKS.

This sequence belongs to the ABC transporter superfamily. sn-glycerol-3-phosphate importer (TC 3.A.1.1.3) family. As to quaternary structure, the complex is composed of two ATP-binding proteins (UgpC), two transmembrane proteins (UgpA and UgpE) and a solute-binding protein (UgpB).

It localises to the cell inner membrane. The enzyme catalyses sn-glycerol 3-phosphate(out) + ATP + H2O = sn-glycerol 3-phosphate(in) + ADP + phosphate + H(+). In terms of biological role, part of the ABC transporter complex UgpBAEC involved in sn-glycerol-3-phosphate (G3P) import. Responsible for energy coupling to the transport system. This Brucella abortus (strain 2308) protein is sn-glycerol-3-phosphate import ATP-binding protein UgpC.